The chain runs to 500 residues: Putative glucokinase-2 (500 aa).

Position 2 is an N-acetylserine (S2). A Phosphoserine modification is found at S2. Residues 12–498 enclose the Hexokinase domain; sequence EALEDAVVEI…SGVGAALCAL (487 aa). The hexokinase small subdomain stretch occupies residues 74–217; it reads NGTERGVLLA…LSMINVVALT (144 aa). Residue K110 coordinates ATP. Positions 159–185 are glucose-binding; that stretch reads KMGFTFSYPVDQTSLSSGTLIRWTKSF. Residues 218–487 form a hexokinase large subdomain region; sequence NDTVGTFLSH…RKIHLRLAKD (270 aa). S470 carries the phosphoserine modification. 487-492 lines the ATP pocket; it reads DGSGVG.

This sequence belongs to the hexokinase family.

The protein localises to the cytoplasm. The catalysed reaction is D-glucose + ATP = D-glucose 6-phosphate + ADP + H(+). It participates in carbohydrate degradation; glycolysis; D-glyceraldehyde 3-phosphate and glycerone phosphate from D-glucose: step 1/4. Its function is as follows. Putative glucokinase involved in phosphorylation of aldohexoses and glucose uptake. Involved in sporulation. Required for the full activation of the early meiotic inducer IME1. The protein is Putative glucokinase-2 (EMI2) of Saccharomyces cerevisiae (strain ATCC 204508 / S288c) (Baker's yeast).